The following is a 370-amino-acid chain: MYKLNKKVIVAMSGGVDSSVTAWILKKKGYHVEGLFMKNWEEHNSDSDMHCSSKKDLSDAQGVCNQLNIFLHKVNFSFEYWENVFQKFLFEYKMGRTPNPDVLCNKEIKFKIFFEYSIQDLQAHYIATGHYVQKRIFKNKYFLLRGLDATKDQSYFLYTINQKVLKQCLFPIGHLTKCEVRKIARRINLIVAKKKDSTGICFISPQNIKKFLNHYLPHKSGNIITTLGQKIGQHYGLIHYTIGQRRGLGIGGIKGFNNIPWYVVSKDITNNSLIVSQGMNNFYLMSIGLIANELHWINDINIQNSFFCTAKIRYRHIDIPCKIVMHKKKQIKVLFERPESSVAPGQSVVFYLSDLCLGGGIIKKRLPVLK.

ATP-binding positions include A11 to S18 and M37. The tract at residues N99–D101 is interaction with target base in tRNA. The active-site Nucleophile is the C104. C104 and C201 are oxidised to a cystine. G129 is a binding site for ATP. The interaction with tRNA stretch occupies residues K151–Q153. C201 (cysteine persulfide intermediate) is an active-site residue. Residues R313 to Y314 are interaction with tRNA.

Belongs to the MnmA/TRMU family. Interacts with TusE.

The protein resides in the cytoplasm. The enzyme catalyses S-sulfanyl-L-cysteinyl-[protein] + uridine(34) in tRNA + AH2 + ATP = 2-thiouridine(34) in tRNA + L-cysteinyl-[protein] + A + AMP + diphosphate + H(+). Functionally, catalyzes the 2-thiolation of uridine at the wobble position (U34) of tRNA(Lys), tRNA(Glu) and tRNA(Gln), leading to the formation of s(2)U34, the first step of tRNA-mnm(5)s(2)U34 synthesis. Sulfur is provided by IscS, via a sulfur-relay system. Binds ATP and its substrate tRNAs. This is tRNA-specific 2-thiouridylase MnmA from Buchnera aphidicola subsp. Baizongia pistaciae (strain Bp).